We begin with the raw amino-acid sequence, 273 residues long: Shikimate dehydrogenase (NADP(+)) (273 aa).

Residues 15-17 and T62 each bind shikimate; that span reads SKS. K66 acts as the Proton acceptor in catalysis. E78 provides a ligand contact to NADP(+). N87 and D103 together coordinate shikimate. Residues 127–131, 150–155, and M213 each bind NADP(+); these read GAGGA and NRTQEK. Y215 contributes to the shikimate binding site. Residue G237 participates in NADP(+) binding.

Belongs to the shikimate dehydrogenase family. In terms of assembly, homodimer.

It catalyses the reaction shikimate + NADP(+) = 3-dehydroshikimate + NADPH + H(+). It functions in the pathway metabolic intermediate biosynthesis; chorismate biosynthesis; chorismate from D-erythrose 4-phosphate and phosphoenolpyruvate: step 4/7. Functionally, involved in the biosynthesis of the chorismate, which leads to the biosynthesis of aromatic amino acids. Catalyzes the reversible NADPH linked reduction of 3-dehydroshikimate (DHSA) to yield shikimate (SA). This Shewanella woodyi (strain ATCC 51908 / MS32) protein is Shikimate dehydrogenase (NADP(+)).